A 466-amino-acid polypeptide reads, in one-letter code: 3-isopropylmalate dehydratase large subunit (466 aa).

[4Fe-4S] cluster is bound by residues C347, C407, and C410.

It belongs to the aconitase/IPM isomerase family. LeuC type 1 subfamily. Heterodimer of LeuC and LeuD. It depends on [4Fe-4S] cluster as a cofactor.

The catalysed reaction is (2R,3S)-3-isopropylmalate = (2S)-2-isopropylmalate. Its pathway is amino-acid biosynthesis; L-leucine biosynthesis; L-leucine from 3-methyl-2-oxobutanoate: step 2/4. Functionally, catalyzes the isomerization between 2-isopropylmalate and 3-isopropylmalate, via the formation of 2-isopropylmaleate. In Shewanella piezotolerans (strain WP3 / JCM 13877), this protein is 3-isopropylmalate dehydratase large subunit.